Consider the following 205-residue polypeptide: Small ribosomal subunit protein uS4 (205 aa).

The interval 26–47 is disordered; sequence PVNKREYGPGQHGQRRKQKPSD. Positions 94-154 constitute an S4 RNA-binding domain; that stretch reads RRLDAVVYRL…EKSKHLAIVL (61 aa).

The protein belongs to the universal ribosomal protein uS4 family. As to quaternary structure, part of the 30S ribosomal subunit. Contacts protein S5. The interaction surface between S4 and S5 is involved in control of translational fidelity.

Its function is as follows. One of the primary rRNA binding proteins, it binds directly to 16S rRNA where it nucleates assembly of the body of the 30S subunit. In terms of biological role, with S5 and S12 plays an important role in translational accuracy. The chain is Small ribosomal subunit protein uS4 from Gluconacetobacter diazotrophicus (strain ATCC 49037 / DSM 5601 / CCUG 37298 / CIP 103539 / LMG 7603 / PAl5).